Reading from the N-terminus, the 109-residue chain is Large ribosomal subunit protein uL22 (109 aa).

It belongs to the universal ribosomal protein uL22 family. In terms of assembly, part of the 50S ribosomal subunit.

In terms of biological role, this protein binds specifically to 23S rRNA; its binding is stimulated by other ribosomal proteins, e.g. L4, L17, and L20. It is important during the early stages of 50S assembly. It makes multiple contacts with different domains of the 23S rRNA in the assembled 50S subunit and ribosome. The globular domain of the protein is located near the polypeptide exit tunnel on the outside of the subunit, while an extended beta-hairpin is found that lines the wall of the exit tunnel in the center of the 70S ribosome. The sequence is that of Large ribosomal subunit protein uL22 from Blochmanniella pennsylvanica (strain BPEN).